Here is a 79-residue protein sequence, read N- to C-terminus: CATR tumorigenic conversion 1 protein (79 aa).

In Homo sapiens (Human), this protein is CATR tumorigenic conversion 1 protein (CATR1).